A 270-amino-acid polypeptide reads, in one-letter code: Undecaprenyl-diphosphatase (270 aa).

A run of 7 helical transmembrane segments spans residues 3-23, 42-62, 86-106, 108-128, 184-204, 217-237, and 249-269; these read TIVT…LPVS, WAMF…VQYW, LLAA…YIDV, LGSP…ILVI, AEFS…LELL, VGWS…LAVI, and FKPF…WLAM.

The protein belongs to the UppP family.

It localises to the cell inner membrane. It catalyses the reaction di-trans,octa-cis-undecaprenyl diphosphate + H2O = di-trans,octa-cis-undecaprenyl phosphate + phosphate + H(+). In terms of biological role, catalyzes the dephosphorylation of undecaprenyl diphosphate (UPP). Confers resistance to bacitracin. In Novosphingobium aromaticivorans (strain ATCC 700278 / DSM 12444 / CCUG 56034 / CIP 105152 / NBRC 16084 / F199), this protein is Undecaprenyl-diphosphatase.